We begin with the raw amino-acid sequence, 323 residues long: Viral cathepsin (323 aa).

Residues 1-16 form the signal peptide; sequence MNKILFYLFVYGVVNS. The propeptide at 17-112 is activation peptide; sequence AAYDLLKAPN…IVLDQPPGKG (96 aa). Intrachain disulfides connect Cys-133/Cys-174, Cys-167/Cys-207, and Cys-262/Cys-310. Cys-136 is an active-site residue. N-linked (GlcNAc...) asparagine; by host glycosylation is present at Asn-158. Catalysis depends on residues His-269 and Asn-289.

It belongs to the peptidase C1 family. In terms of processing, synthesized as an inactive proenzyme and activated by proteolytic removal of the inhibitory propeptide.

It catalyses the reaction Endopeptidase of broad specificity, hydrolyzing substrates of both cathepsin L and cathepsin B.. In terms of biological role, cysteine protease that plays an essential role in host liquefaction to facilitate horizontal transmission of the virus. May participate in the degradation of foreign protein expressed by the baculovirus system. This is Viral cathepsin (VCATH) from Helicoverpa zea (Corn earworm moth).